We begin with the raw amino-acid sequence, 105 residues long: UPF0145 protein AHA_2580 (105 aa).

It belongs to the UPF0145 family.

This Aeromonas hydrophila subsp. hydrophila (strain ATCC 7966 / DSM 30187 / BCRC 13018 / CCUG 14551 / JCM 1027 / KCTC 2358 / NCIMB 9240 / NCTC 8049) protein is UPF0145 protein AHA_2580.